Consider the following 122-residue polypeptide: Large ribosomal subunit protein bL20 (122 aa).

Belongs to the bacterial ribosomal protein bL20 family.

Binds directly to 23S ribosomal RNA and is necessary for the in vitro assembly process of the 50S ribosomal subunit. It is not involved in the protein synthesizing functions of that subunit. The protein is Large ribosomal subunit protein bL20 of Saccharopolyspora erythraea (strain ATCC 11635 / DSM 40517 / JCM 4748 / NBRC 13426 / NCIMB 8594 / NRRL 2338).